Consider the following 143-residue polypeptide: Flagellar assembly factor FliW (143 aa).

The protein belongs to the FliW family. In terms of assembly, interacts with translational regulator CsrA and flagellin(s).

Its subcellular location is the cytoplasm. Acts as an anti-CsrA protein, binds CsrA and prevents it from repressing translation of its target genes, one of which is flagellin. Binds to flagellin and participates in the assembly of the flagellum. The chain is Flagellar assembly factor FliW from Clostridium botulinum (strain ATCC 19397 / Type A).